A 285-amino-acid polypeptide reads, in one-letter code: Chitinase 4 (285 aa).

Positions 1–27 (MAAKMATMVALVFGLALLLSAAAPAAA) are cleaved as a signal peptide. The region spanning 28–62 (QNCGCQDGYCCSQWGYCGTTEAYCGQGCQSGPCWG) is the Chitin-binding type-1 domain. 7 disulfides stabilise this stretch: C30-C38, C32-C44, C37-C51, C55-C60, C104-C153, C166-C175, and C253-C285. Catalysis depends on E148, which acts as the Proton donor.

This sequence belongs to the glycosyl hydrolase 19 family. Chitinase class IV subfamily. As to expression, expressed at low levels in leaves, sheaths and meristems.

It catalyses the reaction Random endo-hydrolysis of N-acetyl-beta-D-glucosaminide (1-&gt;4)-beta-linkages in chitin and chitodextrins.. In terms of biological role, hydrolyzes chitin and may function in reproductive organs during embryogenesis and seed maturation. The sequence is that of Chitinase 4 (Cht4) from Oryza sativa subsp. japonica (Rice).